The following is a 277-amino-acid chain: MSQVQFSHNPLFCIDIIKTYKPDFTPRVAFILGSGLGALADQIENAVAISYEKLPGFPVSTVHGHAGELVLGHLQGVPVVCMKGRGHFYEGRGMTIMTDAIRTFKLLGCELLFCTNAAGSLRPEVGAGSLVALKDHINTMPGTPMVGLNDDRFGERFFSLANAYDAEYRALLQKVAKEEGFPLTEGVFVSYPGPNFETAAEIRMMQIIGGDVVGMSVVPEVISARHCDLKVVAVSAITNMAEGLSDVKLSHAQTLAAAELSKQNFINLICGFLRKIA.

Phosphate is bound by residues His65, Arg85 to His87, and Ala117. Glu197 is an a purine D-ribonucleoside binding site. Ser216 is a phosphate binding site. Residue Asn239 coordinates a purine D-ribonucleoside.

Belongs to the PNP/MTAP phosphorylase family. As to quaternary structure, hexamer. Dimer of trimers.

It catalyses the reaction a purine D-ribonucleoside + phosphate = a purine nucleobase + alpha-D-ribose 1-phosphate. It participates in purine metabolism; xanthosine degradation. It functions in the pathway purine metabolism; purine nucleoside salvage. With respect to regulation, rapidly inactivated by p-chloromercuriphenylsulfonic acid (p-CMB). Dithiothreitol incubation restores the activity. The purine nucleoside phosphorylases catalyze the phosphorolytic breakdown of the N-glycosidic bond in the beta-(deoxy)ribonucleoside molecules, with the formation of the corresponding free purine bases and pentose-1-phosphate. This protein can degrade all purine nucleosides including xanthosine, inosine and guanosine, but cannot cleave adenosine, deoxyadenosine or hypoxanthine arabinoside. Has a preference for the neutral over the monoanionic form of xanthosine. The polypeptide is Purine nucleoside phosphorylase 2 (xapA) (Escherichia coli (strain K12)).